We begin with the raw amino-acid sequence, 270 residues long: Putative phosphoenolpyruvate synthase regulatory protein (270 aa).

Position 150 to 157 (150 to 157 (GVSRCGKT)) interacts with ADP.

It belongs to the pyruvate, phosphate/water dikinase regulatory protein family. PSRP subfamily.

The catalysed reaction is [pyruvate, water dikinase] + ADP = [pyruvate, water dikinase]-phosphate + AMP + H(+). The enzyme catalyses [pyruvate, water dikinase]-phosphate + phosphate + H(+) = [pyruvate, water dikinase] + diphosphate. In terms of biological role, bifunctional serine/threonine kinase and phosphorylase involved in the regulation of the phosphoenolpyruvate synthase (PEPS) by catalyzing its phosphorylation/dephosphorylation. The protein is Putative phosphoenolpyruvate synthase regulatory protein of Shewanella pealeana (strain ATCC 700345 / ANG-SQ1).